The sequence spans 332 residues: L-lactate dehydrogenase A chain (332 aa).

NAD(+) is bound by residues 29-57 (GAVG…IEDK) and Arg99. Residues Arg106, Asn138, and Arg169 each coordinate substrate. Asn138 contacts NAD(+). Residue His193 is the Proton acceptor of the active site. Thr248 lines the substrate pocket.

This sequence belongs to the LDH/MDH superfamily. LDH family. In terms of assembly, homotetramer.

The protein localises to the cytoplasm. The enzyme catalyses (S)-lactate + NAD(+) = pyruvate + NADH + H(+). Its pathway is fermentation; pyruvate fermentation to lactate; (S)-lactate from pyruvate: step 1/1. Its function is as follows. Interconverts simultaneously and stereospecifically pyruvate and lactate with concomitant interconversion of NADH and NAD(+). The protein is L-lactate dehydrogenase A chain (LDHA) of Sceloporus woodi (Florida scrub lizard).